Reading from the N-terminus, the 417-residue chain is Imidazolonepropionase (417 aa).

Fe(3+)-binding residues include histidine 77 and histidine 79. Zn(2+) is bound by residues histidine 77 and histidine 79. Residues arginine 86, tyrosine 149, and histidine 182 each coordinate 4-imidazolone-5-propanoate. Tyrosine 149 contributes to the N-formimidoyl-L-glutamate binding site. Residue histidine 247 coordinates Fe(3+). Histidine 247 is a binding site for Zn(2+). Position 250 (glutamine 250) interacts with 4-imidazolone-5-propanoate. Aspartate 322 contacts Fe(3+). Aspartate 322 is a binding site for Zn(2+). 2 residues coordinate N-formimidoyl-L-glutamate: asparagine 324 and glycine 326. Threonine 327 is a binding site for 4-imidazolone-5-propanoate.

Belongs to the metallo-dependent hydrolases superfamily. HutI family. It depends on Zn(2+) as a cofactor. The cofactor is Fe(3+).

Its subcellular location is the cytoplasm. It carries out the reaction 4-imidazolone-5-propanoate + H2O = N-formimidoyl-L-glutamate. It functions in the pathway amino-acid degradation; L-histidine degradation into L-glutamate; N-formimidoyl-L-glutamate from L-histidine: step 3/3. In terms of biological role, catalyzes the hydrolytic cleavage of the carbon-nitrogen bond in imidazolone-5-propanoate to yield N-formimidoyl-L-glutamate. It is the third step in the universal histidine degradation pathway. In Cupriavidus taiwanensis (strain DSM 17343 / BCRC 17206 / CCUG 44338 / CIP 107171 / LMG 19424 / R1) (Ralstonia taiwanensis (strain LMG 19424)), this protein is Imidazolonepropionase.